The sequence spans 336 residues: Glyceraldehyde-3-phosphate dehydrogenase (336 aa).

NAD(+) is bound by residues 12–13, D34, and R79; that span reads RI. D-glyceraldehyde 3-phosphate is bound by residues 150–152, T181, 210–211, and R233; these read SCT and TG. C151 (nucleophile) is an active-site residue. Residue N315 participates in NAD(+) binding.

The protein belongs to the glyceraldehyde-3-phosphate dehydrogenase family. In terms of assembly, homotetramer.

It is found in the cytoplasm. The catalysed reaction is D-glyceraldehyde 3-phosphate + phosphate + NAD(+) = (2R)-3-phospho-glyceroyl phosphate + NADH + H(+). It participates in carbohydrate degradation; glycolysis; pyruvate from D-glyceraldehyde 3-phosphate: step 1/5. This is Glyceraldehyde-3-phosphate dehydrogenase (gpdA) from Aspergillus niger.